The following is a 525-amino-acid chain: GMP synthase [glutamine-hydrolyzing] (525 aa).

Positions 9–207 (RILILDFGSQ…VRDICQCEAL (199 aa)) constitute a Glutamine amidotransferase type-1 domain. C86 functions as the Nucleophile in the catalytic mechanism. Residues H181 and E183 contribute to the active site. The GMPS ATP-PPase domain occupies 208-400 (WTPAKIIDDA…LGLPYDMLYR (193 aa)). 235–241 (SGGVDSS) is an ATP binding site.

Homodimer.

It catalyses the reaction XMP + L-glutamine + ATP + H2O = GMP + L-glutamate + AMP + diphosphate + 2 H(+). It participates in purine metabolism; GMP biosynthesis; GMP from XMP (L-Gln route): step 1/1. In terms of biological role, catalyzes the synthesis of GMP from XMP. In Shigella boydii serotype 18 (strain CDC 3083-94 / BS512), this protein is GMP synthase [glutamine-hydrolyzing].